A 470-amino-acid polypeptide reads, in one-letter code: MNPNQKIITIGSVSLGLVVLNILLHIVSITITVLVLPGNGNNGSCNETVIREYNETVRIEKITQWHNTNVIEYIERPESDHFMNNTEPLCDAKGFAPFSKDNGIRIGSRGHVFVIREPFVSCSPTECRTFFITQGSLLNDKHSNGTVKDRSPYRTLMSVEIGQSPNVYQARFEAVAWSATRCHDGKKWMTIGVTGPDAKAVAVVHYGGIPTDVIQSWAGDILRTQESSCTCIQGECYWVMTDGPANRQAQYRAFKAKQGKIIGQTEISFNGGHIEECSCYPNEGKVECVCRDNWTGTNRPVLVISPDLSYRVGYLCAGLPSDTPRGEDSQFTGSCTSPMGNQGYGVKGFGFRQGIDVWMGRTISRTSRSGFEILRVRNGWVQNSKEQIKRQVVVDNLNWSGYSGSFTLPVELTKRNCLVPCFWVEMIRGKPEEKTIWTSSSSIVMCGVDHEIADWSWHDGAILPFDIDKM.

Residues 1–14 (MNPNQKIITIGSVS) are Intravirion-facing. The involved in apical transport and lipid raft association stretch occupies residues 11–32 (GSVSLGLVVLNILLHIVSITIT). The chain crosses the membrane as a helical span at residues 15 to 35 (LGLVVLNILLHIVSITITVLV). The tract at residues 32–86 (TVLVLPGNGNNGSCNETVIREYNETVRIEKITQWHNTNVIEYIERPESDHFMNNT) is hypervariable stalk region. Over 36–470 (LPGNGNNGSC…AILPFDIDKM (435 aa)) the chain is Virion surface. N42, N46, N54, and N84 each carry an N-linked (GlcNAc...) asparagine; by host glycan. Residues 89–470 (LCDAKGFAPF…AILPFDIDKM (382 aa)) form a head of neuraminidase region. 8 disulfides stabilise this stretch: C90/C417, C122/C127, C182/C229, C231/C236, C277/C290, C279/C288, C316/C335, and C421/C446. Substrate is bound at residue R116. The N-linked (GlcNAc...) asparagine; by host glycan is linked to N144. D149 functions as the Proton donor/acceptor in the catalytic mechanism. Position 150 (R150) interacts with substrate. Position 275 to 276 (275 to 276 (EE)) interacts with substrate. Substrate is bound at residue R291. D292 contacts Ca(2+). An N-linked (GlcNAc...) asparagine; by host glycan is attached at N293. Ca(2+) is bound by residues G296 and D322. R368 serves as a coordination point for substrate. N398 carries N-linked (GlcNAc...) asparagine; by host glycosylation. Residue Y402 is the Nucleophile of the active site.

It belongs to the glycosyl hydrolase 34 family. Homotetramer. Ca(2+) serves as cofactor. In terms of processing, N-glycosylated.

Its subcellular location is the virion membrane. It localises to the host apical cell membrane. The enzyme catalyses Hydrolysis of alpha-(2-&gt;3)-, alpha-(2-&gt;6)-, alpha-(2-&gt;8)- glycosidic linkages of terminal sialic acid residues in oligosaccharides, glycoproteins, glycolipids, colominic acid and synthetic substrates.. Inhibited by the neuraminidase inhibitors zanamivir (Relenza) and oseltamivir (Tamiflu). These drugs interfere with the release of progeny virus from infected cells and are effective against all influenza strains. Resistance to neuraminidase inhibitors is quite rare. Catalyzes the removal of terminal sialic acid residues from viral and cellular glycoconjugates. Cleaves off the terminal sialic acids on the glycosylated HA during virus budding to facilitate virus release. Additionally helps virus spread through the circulation by further removing sialic acids from the cell surface. These cleavages prevent self-aggregation and ensure the efficient spread of the progeny virus from cell to cell. Otherwise, infection would be limited to one round of replication. Described as a receptor-destroying enzyme because it cleaves a terminal sialic acid from the cellular receptors. May facilitate viral invasion of the upper airways by cleaving the sialic acid moieties on the mucin of the airway epithelial cells. Likely to plays a role in the budding process through its association with lipid rafts during intracellular transport. May additionally display a raft-association independent effect on budding. Plays a role in the determination of host range restriction on replication and virulence. Sialidase activity in late endosome/lysosome traffic seems to enhance virus replication. The polypeptide is Neuraminidase (Influenza A virus (strain A/Guinea fowl/New York/4-3587/1984 H3N8)).